Reading from the N-terminus, the 150-residue chain is Catabolic 3-dehydroquinase 1 (150 aa).

The active-site Proton acceptor is Y24. Positions 75, 81, and 88 each coordinate substrate. H101 (proton donor) is an active-site residue. Residues 102–103 (VS) and R112 each bind substrate.

It belongs to the type-II 3-dehydroquinase family. Homododecamer. Adopts a ring-like structure, composed of an arrangement of two hexameric rings stacked on top of one another.

It catalyses the reaction 3-dehydroquinate = 3-dehydroshikimate + H2O. The protein operates within aromatic compound metabolism; 3,4-dihydroxybenzoate biosynthesis; 3,4-dihydroxybenzoate from 3-dehydroquinate: step 1/2. Functionally, is involved in the catabolism of quinate. Allows the utilization of quinate as carbon source via the beta-ketoadipate pathway. The polypeptide is Catabolic 3-dehydroquinase 1 (Neosartorya fischeri (strain ATCC 1020 / DSM 3700 / CBS 544.65 / FGSC A1164 / JCM 1740 / NRRL 181 / WB 181) (Aspergillus fischerianus)).